Consider the following 212-residue polypeptide: ER lumen protein-retaining receptor 2 (212 aa).

At 1–4 the chain is on the lumenal side; sequence MNIF. The helical transmembrane segment at 5-24 threads the bilayer; it reads RLTGDLSHLAAIIILLLKIW. The Cytoplasmic portion of the chain corresponds to 25 to 32; the sequence is KSRSCAGI. Residues 33-52 traverse the membrane as a helical segment; that stretch reads SGKSQLLFALVFTTRYLDLF. The tract at residues 47–48 is interaction with the K-D-E-L motif on target proteins; the sequence is RY. Residues 53-58 are Lumenal-facing; the sequence is TSFISL. The chain crosses the membrane as a helical span at residues 59–79; it reads YNTSMKLIYIACSYATVYLIY. Topologically, residues 80–92 are cytoplasmic; sequence MKFKATYDGNHDT. A helical transmembrane segment spans residues 93 to 110; that stretch reads FRVEFLIVPVGGLSFLVN. Topologically, residues 111 to 116 are lumenal; it reads HDFSPL. A helical transmembrane segment spans residues 117–135; that stretch reads EILWTFSIYLESVAILPQL. Over 136 to 149 the chain is Cytoplasmic; the sequence is FMISKTGEAETITT. A helical membrane pass occupies residues 150 to 168; sequence HYLFFLGLYRALYLVNWIW. Residues 159-169 are interaction with the K-D-E-L motif on target proteins; sequence RALYLVNWIWR. Topologically, residues 169–178 are lumenal; sequence RYYFEGFFDL. A helical membrane pass occupies residues 179–199; that stretch reads IAVVAGVVQTVLYCDFFYLYV. The Cytoplasmic segment spans residues 200–212; the sequence is TKVLKGKKLSLPA. Residues 204–207 form an important for recycling of cargo proteins with the sequence motif K-D-E-L from the Golgi to the endoplasmic reticulum region; it reads KGKK.

The protein belongs to the ERD2 family.

The protein resides in the endoplasmic reticulum membrane. It is found in the golgi apparatus membrane. It localises to the cytoplasmic vesicle. Its subcellular location is the COPI-coated vesicle membrane. In terms of biological role, membrane receptor that binds the K-D-E-L sequence motif in the C-terminal part of endoplasmic reticulum resident proteins and maintains their localization in that compartment by participating to their vesicle-mediated recycling back from the Golgi. Binding is pH dependent, and is optimal at pH 5-5.4. In Gallus gallus (Chicken), this protein is ER lumen protein-retaining receptor 2 (KDELR2).